A 120-amino-acid polypeptide reads, in one-letter code: Large ribosomal subunit protein uL18 (120 aa).

The disordered stretch occupies residues 1–22 (MITKTSKNAARQKRHARVRAKL). Residues 10-20 (ARQKRHARVRA) show a composition bias toward basic residues.

Belongs to the universal ribosomal protein uL18 family. As to quaternary structure, part of the 50S ribosomal subunit; part of the 5S rRNA/L5/L18/L25 subcomplex. Contacts the 5S and 23S rRNAs.

In terms of biological role, this is one of the proteins that bind and probably mediate the attachment of the 5S RNA into the large ribosomal subunit, where it forms part of the central protuberance. This is Large ribosomal subunit protein uL18 from Bacillus velezensis (strain DSM 23117 / BGSC 10A6 / LMG 26770 / FZB42) (Bacillus amyloliquefaciens subsp. plantarum).